Here is a 199-residue protein sequence, read N- to C-terminus: MAKLETLKAALEKVLGKRVQKLIEATGELTLIVKADDYLEVARTLRDDPSLRFEQLIDLCGVDYSDFGDGAWDGLRFAAVSHLLSVTHNWRLRLRVFAPDDDFPVVPSLIDVWNSVNWFEREAFDFYGIVFEGHPDLRRLLTDYGFVGHPFRKDFPVSGYVEMRYDPEQKRVIYQPVTIEPREITPRVIREENYGGTQH.

This sequence belongs to the complex I 30 kDa subunit family. As to quaternary structure, NDH-1 is composed of 14 different subunits. Subunits NuoB, C, D, E, F, and G constitute the peripheral sector of the complex.

It localises to the cell inner membrane. The enzyme catalyses a quinone + NADH + 5 H(+)(in) = a quinol + NAD(+) + 4 H(+)(out). NDH-1 shuttles electrons from NADH, via FMN and iron-sulfur (Fe-S) centers, to quinones in the respiratory chain. The immediate electron acceptor for the enzyme in this species is believed to be ubiquinone. Couples the redox reaction to proton translocation (for every two electrons transferred, four hydrogen ions are translocated across the cytoplasmic membrane), and thus conserves the redox energy in a proton gradient. In Cupriavidus pinatubonensis (strain JMP 134 / LMG 1197) (Cupriavidus necator (strain JMP 134)), this protein is NADH-quinone oxidoreductase subunit C.